The chain runs to 1275 residues: Rho1 guanine nucleotide exchange factor 3 (1275 aa).

Disordered regions lie at residues 1–42 (MKLS…SFQK), 56–113 (SPPF…NSAA), 131–188 (NNPL…SPYS), and 214–248 (LSPT…VEYL). Residues 7 to 17 (LFHRSSKDHGG) are compositionally biased toward basic and acidic residues. Composition is skewed to polar residues over residues 32 to 42 (PHSSSPPSFQK), 80 to 113 (ASIN…NSAA), and 142 to 151 (SPGNKQNTVD). Low complexity-rich tracts occupy residues 178-188 (SSVSSHSSPYS) and 214-228 (LSPT…SPIR). S293 carries the post-translational modification Phosphoserine. Positions 465 to 657 (ARQNNIHELI…RATCEECDAV (193 aa)) constitute a DH domain. In terms of domain architecture, PH spans 692 to 855 (EFFFEGIVQR…WVEKINVAKK (164 aa)). Residues 930–1239 (YGDISCIAQF…KYYPSNSDWL (310 aa)) enclose the CNH domain.

Its subcellular location is the cytoplasm. Its function is as follows. Stimulates the exchange of Rho1 GDP-bound form into GTP-bound form. Regulates, via interaction and activation of Rho1, beta-1,3-glucan biosynthesis and cell wall integrity during septation. Involved in the regulation of contractile ring assembly. The sequence is that of Rho1 guanine nucleotide exchange factor 3 (rgf3) from Schizosaccharomyces pombe (strain 972 / ATCC 24843) (Fission yeast).